The following is a 300-amino-acid chain: 4-diphosphocytidyl-2-C-methyl-D-erythritol kinase (300 aa).

Residue K22 is part of the active site. Residue 105-115 (PMGGGLGGGSS) coordinates ATP. D147 is a catalytic residue.

Belongs to the GHMP kinase family. IspE subfamily.

It carries out the reaction 4-CDP-2-C-methyl-D-erythritol + ATP = 4-CDP-2-C-methyl-D-erythritol 2-phosphate + ADP + H(+). It functions in the pathway isoprenoid biosynthesis; isopentenyl diphosphate biosynthesis via DXP pathway; isopentenyl diphosphate from 1-deoxy-D-xylulose 5-phosphate: step 3/6. Catalyzes the phosphorylation of the position 2 hydroxy group of 4-diphosphocytidyl-2C-methyl-D-erythritol. The polypeptide is 4-diphosphocytidyl-2-C-methyl-D-erythritol kinase (Colwellia psychrerythraea (strain 34H / ATCC BAA-681) (Vibrio psychroerythus)).